Here is a 241-residue protein sequence, read N- to C-terminus: MSAIKDERNNDHLVQSHDPEHPANLIPALCRNFYGHGWVTGTGGGASIKRDNHIFIAPSGVQKELIQPHNIFVLQYPTPKYPPSARQYIRKPLELKPSACTPLFLAAFDRGAGCCIHTHSQWAVLVTLLVEREKGLEGCFEISNIEQIKGIPKGKGKGMMGFFDTLKIPIIENTAFEEDLTSSLEEAMEKYPDTYAVLVRRHGIYVWGDDVAKAKTQCESLDYLFQLAVEMHKLGLPWVKP.

Residues 1–20 (MSAIKDERNNDHLVQSHDPE) form a disordered region. Substrate is bound at residue Cys-100. Zn(2+)-binding residues include His-117 and His-119. Glu-146 acts as the Proton donor/acceptor in catalysis. His-202 provides a ligand contact to Zn(2+).

This sequence belongs to the aldolase class II family. MtnB subfamily. The cofactor is Zn(2+).

Its subcellular location is the cytoplasm. It carries out the reaction 5-(methylsulfanyl)-D-ribulose 1-phosphate = 5-methylsulfanyl-2,3-dioxopentyl phosphate + H2O. The protein operates within amino-acid biosynthesis; L-methionine biosynthesis via salvage pathway; L-methionine from S-methyl-5-thio-alpha-D-ribose 1-phosphate: step 2/6. Functionally, catalyzes the dehydration of methylthioribulose-1-phosphate (MTRu-1-P) into 2,3-diketo-5-methylthiopentyl-1-phosphate (DK-MTP-1-P). The protein is Methylthioribulose-1-phosphate dehydratase of Blastomyces gilchristii (strain SLH14081) (Blastomyces dermatitidis).